A 183-amino-acid chain; its full sequence is Capsid protein (183 aa).

A disordered region spans residues 136–183; that stretch reads NAPILSTLPETTVVRRRGRSPRRRTPSPRRRRSQSPRRRRTQSRESQC. Residues 149-176 show a composition bias toward basic residues; the sequence is VRRRGRSPRRRTPSPRRRRSQSPRRRRT. Residues Ser155, Ser162, and Ser170 each carry the phosphoserine; by host modification. A 1; half-length repeat occupies 155–161; that stretch reads SPRRRTP. Positions 155–177 are 3 X 8 AA repeats of S-P-R-R-R-[PR]-[ST]-Q; that stretch reads SPRRRTPSPRRRRSQSPRRRRTQ. The Bipartite nuclear localization signal motif lies at 158–175; sequence RRTPSPRRRRSQSPRRRR. Repeat copies occupy residues 162 to 169 and 170 to 177. The tract at residues 177 to 183 is RNA binding; it reads QSRESQC.

This sequence belongs to the orthohepadnavirus core antigen family. As to quaternary structure, homodimerizes, then multimerizes. Interacts with cytosol exposed regions of viral L glycoprotein present in the reticulum-to-Golgi compartment. Interacts with human FLNB. Phosphorylated form interacts with host importin alpha; this interaction depends on the exposure of the NLS, which itself depends upon genome maturation and/or phosphorylation of the capsid protein. Interacts with host NUP153. Post-translationally, phosphorylated by host SRPK1, SRPK2, and maybe protein kinase C or GAPDH. Phosphorylation is critical for pregenomic RNA packaging. Protein kinase C phosphorylation is stimulated by HBx protein and may play a role in transport of the viral genome to the nucleus at the late step during the viral replication cycle.

Its subcellular location is the virion. It is found in the host cytoplasm. Self assembles to form an icosahedral capsid. Most capsids appear to be large particles with an icosahedral symmetry of T=4 and consist of 240 copies of capsid protein, though a fraction forms smaller T=3 particles consisting of 180 capsid proteins. Entering capsids are transported along microtubules to the nucleus. Phosphorylation of the capsid is thought to induce exposure of nuclear localization signal in the C-terminal portion of the capsid protein that allows binding to the nuclear pore complex via the importin (karyopherin-) alpha and beta. Capsids are imported in intact form through the nuclear pore into the nuclear basket, where it probably binds NUP153. Only capsids that contain the mature viral genome can release the viral DNA and capsid protein into the nucleoplasm. Immature capsids get stuck in the basket. Capsids encapsulate the pre-genomic RNA and the P protein. Pre-genomic RNA is reverse-transcribed into DNA while the capsid is still in the cytoplasm. The capsid can then either be directed to the nucleus, providing more genomes for transcription, or bud through the endoplasmic reticulum to provide new virions. This is Capsid protein from Hepatitis B virus genotype D (isolate France/alpha1/1989) (HBV-D).